A 730-amino-acid chain; its full sequence is Dual function macrocyclase-peptidase POPB (730 aa).

Residues Ser-577, Asp-661, and His-698 each act as charge relay system in the active site.

Belongs to the peptidase S9A family. Monomer. Expressed in the pileus (cap) and lamellae where it colocalizes with amanitin.

The enzyme catalyses Hydrolysis of Pro-|-Xaa &gt;&gt; Ala-|-Xaa in oligopeptides.. Its function is as follows. Dual function macrocyclase-peptidase involved in the biosynthesis of the highly toxic amanitin toxin family of macrocycles. Cleaves peptide bonds on the C-terminal side of prolyl residues. The enzyme first removes 10 residues from the N-terminus of a 35-residue substrate. Conformational trapping of the 25 amino-acid peptide forces the enzyme to release this intermediate rather than proceed to macrocyclization. The enzyme rebinds the 25 amino-acid peptide in a different conformation and catalyzes macrocyclization of the N-terminal eight residues. In Amanita bisporigera (Destroying angel), this protein is Dual function macrocyclase-peptidase POPB.